Here is a 378-residue protein sequence, read N- to C-terminus: Putative glycosyltransferase ORF378 (378 aa).

This sequence belongs to the glycosyltransferase group 1 family. Glycosyltransferase 4 subfamily.

This chain is Putative glycosyltransferase ORF378, found in Acidianus sp. F28 (AFV-2).